The chain runs to 375 residues: Chlorophyll a/b light-harvesting protein PcbC (375 aa).

6 helical membrane-spanning segments follow: residues 40-60 (LLGA…SITV), 102-122 (YFVI…GGLF), 151-171 (LSLI…AFVA), 225-245 (IIGG…WHIL), 262-282 (AILS…GFFV), and 300-320 (GAAA…VWHA). The tract at residues 352–375 (ARTFIGRGKPQPEPPKKKGLFGRG) is disordered.

The protein belongs to the PsbB/PsbC family. IsiA/Pcb subfamily. As to quaternary structure, the antenna complex consists of chlorophylls (a and b) and chlorophyll a/b binding proteins. Chlorophyll a serves as cofactor. Chlorophyll b is required as a cofactor.

The protein resides in the cellular thylakoid membrane. Functionally, the antenna complex functions as a light receptor, it captures and delivers excitation energy to photosystems II and I. The Prochlorales pcb genes are not related to higher plant LHCs. In Prochlorothrix hollandica, this protein is Chlorophyll a/b light-harvesting protein PcbC (pcbC).